A 326-amino-acid polypeptide reads, in one-letter code: Malate dehydrogenase (326 aa).

12–18 (GGTGQIA) contacts NAD(+). Substrate-binding residues include Arg93 and Arg99. Residues Asn106, Gln113, and 130 to 132 (VGN) each bind NAD(+). Substrate is bound by residues Asn132 and Arg163. The active-site Proton acceptor is the His188.

It belongs to the LDH/MDH superfamily. MDH type 2 family.

It catalyses the reaction (S)-malate + NAD(+) = oxaloacetate + NADH + H(+). Catalyzes the reversible oxidation of malate to oxaloacetate. The chain is Malate dehydrogenase from Chlamydia trachomatis serovar A (strain ATCC VR-571B / DSM 19440 / HAR-13).